The following is a 371-amino-acid chain: Queuine tRNA-ribosyltransferase (371 aa).

Catalysis depends on aspartate 89, which acts as the Proton acceptor. Substrate-binding positions include 89–93 (DSGGF), aspartate 143, glutamine 185, and glycine 212. The tract at residues 243–249 (GVGKPED) is RNA binding. The Nucleophile role is filled by aspartate 262. The tract at residues 267-271 (TRNAR) is RNA binding; important for wobble base 34 recognition. Zn(2+)-binding residues include cysteine 300, cysteine 302, cysteine 305, and histidine 331.

Belongs to the queuine tRNA-ribosyltransferase family. Homodimer. Within each dimer, one monomer is responsible for RNA recognition and catalysis, while the other monomer binds to the replacement base PreQ1. The cofactor is Zn(2+).

The enzyme catalyses 7-aminomethyl-7-carbaguanine + guanosine(34) in tRNA = 7-aminomethyl-7-carbaguanosine(34) in tRNA + guanine. The protein operates within tRNA modification; tRNA-queuosine biosynthesis. Catalyzes the base-exchange of a guanine (G) residue with the queuine precursor 7-aminomethyl-7-deazaguanine (PreQ1) at position 34 (anticodon wobble position) in tRNAs with GU(N) anticodons (tRNA-Asp, -Asn, -His and -Tyr). Catalysis occurs through a double-displacement mechanism. The nucleophile active site attacks the C1' of nucleotide 34 to detach the guanine base from the RNA, forming a covalent enzyme-RNA intermediate. The proton acceptor active site deprotonates the incoming PreQ1, allowing a nucleophilic attack on the C1' of the ribose to form the product. After dissociation, two additional enzymatic reactions on the tRNA convert PreQ1 to queuine (Q), resulting in the hypermodified nucleoside queuosine (7-(((4,5-cis-dihydroxy-2-cyclopenten-1-yl)amino)methyl)-7-deazaguanosine). In Thioalkalivibrio sulfidiphilus (strain HL-EbGR7), this protein is Queuine tRNA-ribosyltransferase.